Here is a 661-residue protein sequence, read N- to C-terminus: NUAK family SNF1-like kinase 1 (661 aa).

Methionine 1 bears the N-acetylmethionine mark. The interval 1–24 (MEGAAAPVAGDRPDLGLGAPGSPR) is disordered. Phosphoserine is present on serine 22. The region spanning 55–306 (YELQETLGKG…IEDIANHWWV (252 aa)) is the Protein kinase domain. ATP-binding positions include 61–69 (LGKGTYGKV) and lysine 84. The active-site Proton acceptor is aspartate 178. Threonine 211 carries the phosphothreonine; by LKB1 modification. Disordered stretches follow at residues 345–421 (TEAK…EGVV) and 442–570 (LPSS…RPSS). Basic residues predominate over residues 393 to 404 (SSKRPKGILKKR). The GILK motif motif lies at 399 to 402 (GILK). Serine 455 carries the phosphoserine modification. Over residues 518 to 529 (SCRRKGILKHSS) the composition is skewed to basic residues. Serine 600 bears the Phosphoserine; by PKB/AKT1 mark.

It belongs to the protein kinase superfamily. CAMK Ser/Thr protein kinase family. SNF1 subfamily. As to quaternary structure, interacts (via GILK motif) with PPP1CB; the interaction is direct and bridges NUAK1 and PPP1R12A. Interacts with CDKN1A. Mg(2+) is required as a cofactor. In terms of processing, ubiquitinated with 'Lys-29'- and 'Lys-33'-linked polyubiquitins which appear to impede LKB1-mediated phosphorylation. Deubiquitinated by USP9X. Phosphorylated at Thr-211 by STK11/LKB1 in complex with STE20-related adapter-alpha (STRADA) pseudo kinase and CAB39. Not dephosphorylated by the myosin PP1 complex when regulating its activity, due to the presence of PPP1R12A, which prevents myosin PP1 from dephosphorylating NUAK1. Phosphorylated by STK38L upon stimulation with IGF1. In terms of tissue distribution, expressed at high levels in heart and brain, and at lower levels in skeletal muscle, kidney, ovary, placenta, lung and liver. Highly up-regulated in colorectal cancer cell lines.

It localises to the nucleus. It is found in the cytoplasm. It catalyses the reaction L-seryl-[protein] + ATP = O-phospho-L-seryl-[protein] + ADP + H(+). The catalysed reaction is L-threonyl-[protein] + ATP = O-phospho-L-threonyl-[protein] + ADP + H(+). With respect to regulation, activated by phosphorylation on Thr-211. Activated by phosphorylation at Ser-600 AKT1 during glucose starvation; the relevance of such activation in normal cells is however unsure. Serine/threonine-protein kinase involved in various processes such as cell adhesion, regulation of cell ploidy and senescence, cell proliferation and tumor progression. Phosphorylates ATM, CASP6, LATS1, PPP1R12A and p53/TP53. Acts as a regulator of cellular senescence and cellular ploidy by mediating phosphorylation of 'Ser-464' of LATS1, thereby controlling its stability. Controls cell adhesion by regulating activity of the myosin protein phosphatase 1 (PP1) complex. Acts by mediating phosphorylation of PPP1R12A subunit of myosin PP1: phosphorylated PPP1R12A then interacts with 14-3-3, leading to reduced dephosphorylation of myosin MLC2 by myosin PP1. May be involved in DNA damage response: phosphorylates p53/TP53 at 'Ser-15' and 'Ser-392' and is recruited to the CDKN1A/WAF1 promoter to participate in transcription activation by p53/TP53. May also act as a tumor malignancy-associated factor by promoting tumor invasion and metastasis under regulation and phosphorylation by AKT1. Suppresses Fas-induced apoptosis by mediating phosphorylation of CASP6, thereby suppressing the activation of the caspase and the subsequent cleavage of CFLAR. Regulates UV radiation-induced DNA damage response mediated by CDKN1A. In association with STK11, phosphorylates CDKN1A in response to UV radiation and contributes to its degradation which is necessary for optimal DNA repair. This Homo sapiens (Human) protein is NUAK family SNF1-like kinase 1 (NUAK1).